Consider the following 207-residue polypeptide: Basic helix-loop-helix transcription factor scleraxis (207 aa).

Disordered regions lie at residues 1-91 and 151-183; these read MSFA…RDRT and AFFHSGRAGSPLPPPPPPPPLARDGGENTQPKQ. Residues 73-91 are compositionally biased toward basic and acidic residues; that stretch reads PGREPRQRHTANARERDRT. The 53-residue stretch at 78–130 folds into the bHLH domain; the sequence is RQRHTANARERDRTNSVNTAFTALRTLIPTEPADRKLSKIETLRLASSYISHL. The segment covering 161–171 has biased composition (pro residues); that stretch reads PLPPPPPPPPL.

Efficient DNA binding requires dimerization with another bHLH protein. Dimerizes and binds the E-box consensus sequence with E12. In terms of tissue distribution, expressed in mesenchymal precursors of cartilage and in connective tissue. Highly expressed in tendons in the limb, tongue and diaphragm and in cartilage of the bronchi.

The protein localises to the nucleus. Its function is as follows. Plays an early essential role in mesoderm formation, as well as a later role in formation of somite-derived chondrogenic lineages. This is Basic helix-loop-helix transcription factor scleraxis (Scx) from Mus musculus (Mouse).